Reading from the N-terminus, the 248-residue chain is Triosephosphate isomerase (248 aa).

A substrate-binding site is contributed by 9 to 11 (NWK). Catalysis depends on histidine 94, which acts as the Electrophile. The Proton acceptor role is filled by glutamate 166. Substrate is bound by residues glycine 172, serine 212, and 233-234 (GG).

The protein belongs to the triosephosphate isomerase family. Homodimer.

It localises to the cytoplasm. It carries out the reaction D-glyceraldehyde 3-phosphate = dihydroxyacetone phosphate. It functions in the pathway carbohydrate biosynthesis; gluconeogenesis. It participates in carbohydrate degradation; glycolysis; D-glyceraldehyde 3-phosphate from glycerone phosphate: step 1/1. Involved in the gluconeogenesis. Catalyzes stereospecifically the conversion of dihydroxyacetone phosphate (DHAP) to D-glyceraldehyde-3-phosphate (G3P). This Thermoanaerobacter pseudethanolicus (strain ATCC 33223 / 39E) (Clostridium thermohydrosulfuricum) protein is Triosephosphate isomerase.